The primary structure comprises 81 residues: Insulin (81 aa).

3 cysteine pairs are disulfide-bonded: cysteine 7-cysteine 67, cysteine 19-cysteine 80, and cysteine 66-cysteine 71. The propeptide at 33–58 (DVEQPLVNGPLHGEVGELPFQHEEYQ) is c peptide.

Belongs to the insulin family. Heterodimer of a B chain and an A chain linked by two disulfide bonds.

Its subcellular location is the secreted. Its function is as follows. Insulin decreases blood glucose concentration. It increases cell permeability to monosaccharides, amino acids and fatty acids. It accelerates glycolysis, the pentose phosphate cycle, and glycogen synthesis in liver. In Anas platyrhynchos (Mallard), this protein is Insulin (INS).